The primary structure comprises 430 residues: 3-phosphoshikimate 1-carboxyvinyltransferase (430 aa).

Lys-33, Ser-34, and Arg-38 together coordinate 3-phosphoshikimate. Residue Lys-33 participates in phosphoenolpyruvate binding. Residues Gly-101 and Arg-129 each coordinate phosphoenolpyruvate. Ser-172, Ser-173, Gln-174, Ser-201, Glu-319, and His-346 together coordinate 3-phosphoshikimate. Residue Gln-174 coordinates phosphoenolpyruvate. The active-site Proton acceptor is the Glu-319. 3 residues coordinate phosphoenolpyruvate: Arg-350, Arg-391, and Lys-416.

It belongs to the EPSP synthase family. Monomer.

It is found in the cytoplasm. It catalyses the reaction 3-phosphoshikimate + phosphoenolpyruvate = 5-O-(1-carboxyvinyl)-3-phosphoshikimate + phosphate. The protein operates within metabolic intermediate biosynthesis; chorismate biosynthesis; chorismate from D-erythrose 4-phosphate and phosphoenolpyruvate: step 6/7. Its function is as follows. Catalyzes the transfer of the enolpyruvyl moiety of phosphoenolpyruvate (PEP) to the 5-hydroxyl of shikimate-3-phosphate (S3P) to produce enolpyruvyl shikimate-3-phosphate and inorganic phosphate. This Corynebacterium glutamicum (strain R) protein is 3-phosphoshikimate 1-carboxyvinyltransferase.